A 477-amino-acid chain; its full sequence is Cytochrome P450 708A2 (477 aa).

A helical transmembrane segment spans residues 3–23 (FVWSAAVWVIAVAAVVISKWL). Cys426 lines the heme pocket.

It belongs to the cytochrome P450 family. Heme is required as a cofactor. Expressed primarily in the root epidermis.

It localises to the membrane. Its function is as follows. Hydroxylates thalianol into thalian-diol. In Arabidopsis thaliana (Mouse-ear cress), this protein is Cytochrome P450 708A2 (CYP708A2).